The sequence spans 117 residues: Large ribosomal subunit protein bL20c (117 aa).

Belongs to the bacterial ribosomal protein bL20 family.

The protein resides in the plastid. The protein localises to the chloroplast. In terms of biological role, binds directly to 23S ribosomal RNA and is necessary for the in vitro assembly process of the 50S ribosomal subunit. It is not involved in the protein synthesizing functions of that subunit. The chain is Large ribosomal subunit protein bL20c from Populus trichocarpa (Western balsam poplar).